The primary structure comprises 618 residues: Glucose starvation modulator protein 1 (618 aa).

Positions 20-48 (CEFCHTKHIQCDVGRPCQNCLKRNIGKFC) form a DNA-binding region, zn(2)-C6 fungal-type. Positions 325–352 (ANANTHPSHNAKLESECDSSSHSDADLE) are disordered. The segment covering 335 to 352 (AKLESECDSSSHSDADLE) has biased composition (basic and acidic residues). One can recognise a PAS domain in the interval 466-538 (LLDLENMAKL…QIFNELLAFG (73 aa)).

The protein belongs to the ERT1/acuK family.

It is found in the nucleus. Transcription factor which regulates nonfermentable carbon utilization. Binds specifically to 5'-CGGN(8)CGG-3' and 5'-CGGN(9)CGG-3' sequences in the promoter region. The sequence is that of Glucose starvation modulator protein 1 (GSM1) from Saccharomyces cerevisiae (strain ATCC 204508 / S288c) (Baker's yeast).